A 159-amino-acid chain; its full sequence is Aspartate carbamoyltransferase regulatory chain (159 aa).

Residues Cys-108, Cys-113, Cys-138, and Cys-141 each coordinate Zn(2+).

This sequence belongs to the PyrI family. In terms of assembly, contains catalytic and regulatory chains. Zn(2+) is required as a cofactor.

Its function is as follows. Involved in allosteric regulation of aspartate carbamoyltransferase. This Thermofilum pendens (strain DSM 2475 / Hrk 5) protein is Aspartate carbamoyltransferase regulatory chain.